The primary structure comprises 161 residues: Regulator of ribonuclease activity A (161 aa).

It belongs to the RraA family. In terms of assembly, homotrimer. Binds to both RNA-binding sites in the C-terminal region of Rne and to RhlB.

The protein resides in the cytoplasm. Its function is as follows. Globally modulates RNA abundance by binding to RNase E (Rne) and regulating its endonucleolytic activity. Can modulate Rne action in a substrate-dependent manner by altering the composition of the degradosome. Modulates RNA-binding and helicase activities of the degradosome. This chain is Regulator of ribonuclease activity A, found in Shigella boydii serotype 18 (strain CDC 3083-94 / BS512).